Here is a 989-residue protein sequence, read N- to C-terminus: Cation-chloride cotransporter 1 (989 aa).

A compositionally biased stretch (acidic residues) spans 1–10; the sequence is MENGEIEGAA. Positions 1 to 29 are disordered; sequence MENGEIEGAADDGVPVPAPPNGRRYRPVG. At 1 to 132 the chain is on the cytoplasmic side; it reads MENGEIEGAA…GRPKETGPKF (132 aa). Residues 133-153 form a helical membrane-spanning segment; that stretch reads GTMMGVFVPCLQNILGIIYYI. At 154 to 167 the chain is on the extracellular side; that stretch reads RFTWIVGMAGVWQS. Residues 168–188 traverse the membrane as a helical segment; sequence LVLVSFCGACTFLTGISLSAI. Residues 189 to 214 are Cytoplasmic-facing; the sequence is ATNGAMKGGGPYYLIGRALGPEVGVS. The chain crosses the membrane as a helical span at residues 215–235; sequence IGLCFFLGNAVAGSMYVLGAV. At 236–280 the chain is on the extracellular side; sequence ETFLDAVPSAGFFKESVTVVNNTLVNGTATASTATISTPSLHDLQ. Residues N256 and N261 are each glycosylated (N-linked (GlcNAc...) asparagine). A helical transmembrane segment spans residues 281–301; it reads VYGVIVTILLCFIVFGGVKII. Residues 302-304 are Cytoplasmic-facing; it reads NKV. The chain crosses the membrane as a helical span at residues 305–325; the sequence is APAFLIPVLFSLLCIYLGVFI. Topologically, residues 326–365 are extracellular; the sequence is APRHNAPKGITGLSITTFKDNWGSEYQRTNNAGVPDPNGS. N363 carries an N-linked (GlcNAc...) asparagine glycan. A helical transmembrane segment spans residues 366-386; the sequence is IYWDFNALVGLFFPAVTGIMA. At 387–405 the chain is on the cytoplasmic side; the sequence is GSNRSASLKDTQRSIPIGT. A helical membrane pass occupies residues 406–426; the sequence is LSATLTTTAMYLFSVLLFGAL. Residues 427 to 441 lie on the Extracellular side of the membrane; that stretch reads ATREELLTDRLLTAT. Residues 442–462 form a helical membrane-spanning segment; that stretch reads VAWPAPAVIYIGIILSTLGAA. The Cytoplasmic segment spans residues 463–498; the sequence is LQSLTGAPRLLAAIANDDILPVLNYFKVSEGAEPHS. The helical transmembrane segment at 499 to 519 threads the bilayer; the sequence is ATLFTAFICICCVVIGNLDLI. Residues 520 to 522 are Extracellular-facing; the sequence is TPT. A helical membrane pass occupies residues 523-543; that stretch reads ITMFFLLCYAGVNLSCFLLDL. At 544–551 the chain is on the cytoplasmic side; it reads LDAPSWRP. The chain crosses the membrane as a helical span at residues 552–572; it reads RWKFHHWSLSLVGALLCVVIM. At 573 to 578 the chain is on the extracellular side; that stretch reads FLISWS. A helical transmembrane segment spans residues 579 to 599; the sequence is FTVVSLALASLIYYYVSLKGK. The Cytoplasmic segment spans residues 600–989; it reads AGDWGDGFKS…YRRDVVTFFT (390 aa).

It belongs to the SLC12A transporter family. In terms of tissue distribution, expressed in roots, stems and leaves with higher expression in root and leaf tips.

The protein resides in the membrane. Probable cation/chloride cotransporter that may mediate potassium-chloride cotransport. Involved in plant development and K(+) and Cl(-) homeostasis. May not be involved in sodium-chloride cotransport. The polypeptide is Cation-chloride cotransporter 1 (CCC1) (Oryza sativa subsp. japonica (Rice)).